We begin with the raw amino-acid sequence, 358 residues long: Peptide chain release factor 1 (358 aa).

Gln234 carries the post-translational modification N5-methylglutamine. A disordered region spans residues 283 to 306; the sequence is ERLHSERAGQRKSMVGSGDRSERI.

This sequence belongs to the prokaryotic/mitochondrial release factor family. In terms of processing, methylated by PrmC. Methylation increases the termination efficiency of RF1.

It is found in the cytoplasm. Its function is as follows. Peptide chain release factor 1 directs the termination of translation in response to the peptide chain termination codons UAG and UAA. This is Peptide chain release factor 1 from Zymomonas mobilis subsp. mobilis (strain ATCC 31821 / ZM4 / CP4).